We begin with the raw amino-acid sequence, 61 residues long: Fasciculin-2 (61 aa).

Cystine bridges form between Cys-3/Cys-22, Cys-17/Cys-39, Cys-41/Cys-52, and Cys-53/Cys-59.

Belongs to the three-finger toxin family. Short-chain subfamily. Acn-esterase inhibitor sub-subfamily. Expressed by the venom gland.

Its subcellular location is the secreted. Interferes with neuromuscular transmission by inhibiting the enzyme acetylcholinesterase (AChE) present at the neuromuscular junction. It selectively binds and inhibits with a 1:1 stoichiometry the mammalian and electric fish AChE at picomolar concentrations. It is highly specific for the peripheral site of AChE and blocks the entry of acetylcholine into the active site of the enzyme (through the Met-33 residue), thereby preventing its breakdown. It has been called fasciculin since after injection into mice it causes severe, generalized and long-lasting (5-7 hours) fasciculations. This is Fasciculin-2 from Dendroaspis angusticeps (Eastern green mamba).